The chain runs to 396 residues: Elongation factor Tu (396 aa).

The region spanning 10–206 (KPHVNVGTIG…ALDTYIPTPE (197 aa)) is the tr-type G domain. The G1 stretch occupies residues 19–26 (GHVDHGKT). 19-26 (GHVDHGKT) provides a ligand contact to GTP. Thr26 is a binding site for Mg(2+). A G2 region spans residues 60-64 (GITIN). The interval 81 to 84 (DCPG) is G3. Residues 81-85 (DCPGH) and 136-139 (NKAD) contribute to the GTP site. Residues 136–139 (NKAD) form a G4 region. The G5 stretch occupies residues 174–176 (SAK).

This sequence belongs to the TRAFAC class translation factor GTPase superfamily. Classic translation factor GTPase family. EF-Tu/EF-1A subfamily. Monomer.

The protein resides in the cytoplasm. The enzyme catalyses GTP + H2O = GDP + phosphate + H(+). In terms of biological role, GTP hydrolase that promotes the GTP-dependent binding of aminoacyl-tRNA to the A-site of ribosomes during protein biosynthesis. This is Elongation factor Tu from Bordetella bronchiseptica (strain ATCC BAA-588 / NCTC 13252 / RB50) (Alcaligenes bronchisepticus).